The primary structure comprises 321 residues: L-Ala-D/L-Glu epimerase (321 aa).

Positions 124 and 149 each coordinate substrate. Lysine 151 (proton acceptor; specific for (R)-substrate epimerization) is an active-site residue. Mg(2+)-binding residues include aspartate 176, glutamate 202, and aspartate 225. Lysine 247 functions as the Proton acceptor; specific for (S)-substrate epimerization in the catalytic mechanism. The substrate site is built by cysteine 275, aspartate 297, and aspartate 299.

This sequence belongs to the mandelate racemase/muconate lactonizing enzyme family. In terms of assembly, monomer. Mg(2+) serves as cofactor.

The catalysed reaction is L-alanyl-L-glutamate = L-alanyl-D-glutamate. The protein operates within cell wall biogenesis; peptidoglycan recycling. Its function is as follows. Catalyzes the epimerization of L-Ala-D-Glu to L-Ala-L-Glu and has a role in the recycling of the murein peptide, of which L-Ala-D-Glu is a component. Is also able to catalyze the reverse reaction and the epimerization of all the L-Ala-X dipeptides, except L-Ala-L-Arg, L-Ala-L-Lys and L-Ala-L-Pro. Is also active with L-Gly-L-Glu, L-Phe-L-Glu, and L-Ser-L-Glu, but not with L-Glu-L-Glu, L-Lys-L-Glu, L-Pro-L-Glu, L-Lys-L-Ala, or D-Ala-D-Ala. The protein is L-Ala-D/L-Glu epimerase (ycjG) of Escherichia coli (strain K12).